The primary structure comprises 2183 residues: Coagulation factor V (2183 aa).

A signal peptide spans 1 to 19; sequence MLLVCPCFFLLVVLGTRWA. 4 Plastocyanin-like domains span residues 30 to 192, 202 to 328, 347 to 524, and 534 to 682; these read QLRQ…LLIC, TQKM…IKNC, KRWE…LLIC, and VQRV…DVKC. F5/8 type A domains are found at residues 30–328 and 347–682; these read QLRQ…IKNC and KRWE…DVKC. Positions 138 and 139 each coordinate Ca(2+). Asn176, Asn238, and Asn381 each carry an N-linked (GlcNAc...) asparagine glycan. The residue at position 638 (Thr638) is a Phosphothreonine. Residues 691–1533 form a b region; that stretch reads SYEIYEPPAP…PDTIAAWYLR (843 aa). Tyr692 and Tyr725 each carry sulfotyrosine. Residues 737-1533 constitute a propeptide, activation peptide (connecting region); that stretch reads SFKNSSLNPE…PDTIAAWYLR (797 aa). Asn841 carries an N-linked (GlcNAc...) asparagine glycan. Disordered stretches follow at residues 884–904, 947–1045, and 1059–1144; these read PAGK…MKSE, DVDK…FPDR, and ETAL…YDLS. Positions 892-908 are 1 X 17 AA tandem repeats; that stretch reads SNPKNSYSGMKSEEDIP. A 1-1 repeat occupies 892 to 911; it reads SNPKNSYSGMKSEEDIPSEL. At Ser903 the chain carries Phosphoserine. Over residues 951–975 the composition is skewed to polar residues; the sequence is LTNSPQNQNITVPRGESTSHTNTTR. 2 N-linked (GlcNAc...) asparagine glycosylation sites follow: Asn959 and Asn972. The segment covering 1010–1021 has biased composition (basic residues); that stretch reads RTRKKKKNKKLA. 2 stretches are compositionally biased toward polar residues: residues 1059–1099 and 1120–1134; these read ETAL…SLDL and THST…SPPE. 32 consecutive repeat copies span residues 1175–1183, 1184–1192, 1193–1201, 1202–1210, 1211–1219, 1220–1228, 1229–1237, 1238–1246, 1247–1255, 1256–1264, 1265–1273, 1274–1282, 1283–1291, 1292–1299, 1300–1308, 1309–1316, 1317–1325, 1326–1334, 1335–1341, 1342–1350, 1351–1359, 1360–1368, 1369–1377, 1378–1386, 1387–1395, 1396–1404, 1405–1413, 1414–1422, 1423–1431, 1432–1440, 1441–1449, and 1452–1461. A 32 X 9 AA approximate tandem repeats of [TNP]-L-S-P-D-L-S-Q-T region spans residues 1175–1461; it reads IPSSDLSLFT…PSPSPTLNNT (287 aa). The interval 1204-1312 is disordered; the sequence is SPEDNQKTSS…PDLGQVPLFP (109 aa). The span at 1228-1251 shows a compositional bias: polar residues; sequence KTSSPDLGQVSLSPDDNQKTSSPD. Over residues 1292–1304 the composition is skewed to polar residues; the sequence is PLSSDNQKTSSPD. A disordered region spans residues 1403–1462; it reads QTNPALNHGHKASSADPDQASYPPDSGQASSLPELNRTLPHPDLTHIPPPSPSPTLNNTS. Asn1438 is a glycosylation site (N-linked (GlcNAc...) asparagine). Plastocyanin-like domains follow at residues 1538–1711 and 1721–1866; these read HKKF…LLIC and NLPM…DKEC. In terms of domain architecture, F5/8 type A 3 spans 1538–1866; it reads HKKFYYIAAE…TPFLIIDKEC (329 aa). His1802 and His1804 together coordinate Cu cation. N-linked (GlcNAc...) asparagine glycosylation is present at Asn1811. F5/8 type C domains follow at residues 1866–2020 and 2025–2180; these read CKMP…LQGC and CSTP…LFGC. 2 disulfides stabilise this stretch: Cys1866-Cys2020 and Cys2025-Cys2180.

It belongs to the multicopper oxidase family. In terms of assembly, factor Va, the activated form of factor V, is composed of a heavy chain and a light chain, non-covalently bound. The interaction between the two chains is calcium-dependent. Forms heterodimer with SERPINA5. Post-translationally, thrombin activates factor V proteolytically to the active cofactor, factor Va (formation of a heavy chain at the N-terminus and a light chain at the C-terminus). In terms of processing, sulfation is required for efficient thrombin cleavage and activation and for full procoagulant activity. Activated protein C inactivates factor V and factor Va by proteolytic degradation.

The protein resides in the secreted. Its activity is regulated as follows. Inhibited by SERPINA5. In terms of biological role, central regulator of hemostasis. It serves as a critical cofactor for the prothrombinase activity of factor Xa that results in the activation of prothrombin to thrombin. The chain is Coagulation factor V (F5) from Mus musculus (Mouse).